We begin with the raw amino-acid sequence, 471 residues long: Tryptophanase (471 aa).

3 positions are modified to N6-acetyllysine: Lys-5, Lys-115, and Lys-156. Position 270 is an N6-(pyridoxal phosphate)lysine (Lys-270). N6-acetyllysine is present on Lys-450.

Belongs to the beta-eliminating lyase family. Homotetramer. It depends on pyridoxal 5'-phosphate as a cofactor.

The enzyme catalyses L-tryptophan + H2O = indole + pyruvate + NH4(+). The protein operates within amino-acid degradation; L-tryptophan degradation via pyruvate pathway; indole and pyruvate from L-tryptophan: step 1/1. This chain is Tryptophanase (tnaA), found in Escherichia coli O157:H7.